A 266-amino-acid chain; its full sequence is Tryptophan synthase alpha chain (266 aa).

Catalysis depends on proton acceptor residues E47 and D58.

Belongs to the TrpA family. As to quaternary structure, tetramer of two alpha and two beta chains.

The protein resides in the plastid. It localises to the chloroplast. It carries out the reaction (1S,2R)-1-C-(indol-3-yl)glycerol 3-phosphate + L-serine = D-glyceraldehyde 3-phosphate + L-tryptophan + H2O. It functions in the pathway amino-acid biosynthesis; L-tryptophan biosynthesis; L-tryptophan from chorismate: step 5/5. In terms of biological role, the alpha subunit is responsible for the aldol cleavage of indoleglycerol phosphate to indole and glyceraldehyde 3-phosphate. This chain is Tryptophan synthase alpha chain, found in Cyanidium caldarium (Red alga).